Reading from the N-terminus, the 367-residue chain is MNLADKVLVVNDNLPIRTDKPVHSGKVRSVYWLTEEDSARLIKDKGYDVPADAPLAIMVISDRISAFDCVWQGENGLNGVPGKGTALNAISNHWFKLFKDKGLADSHILDIPHPLVWIVQKARPVMIEAIARQYITGSMWRSYTKGEREFCGITIPEGLEKDQKLPELLITPSTKGVLTGLEGVPEADDVNVSRSDIERHVKGFNFSNESDIDLYEKLLKEGFDVISDALAEHDQIFVDTKFEFGYVNDAAGNEKLIYMDEVGTPDSSRIWDGSSHRDGKIIEQSKEGFRQWLLNHFPDPDILLNKNRMVERFALASDNKLPESVMMDISNTYVGIAEKIIGKKLHISDNPKQEIIDILRDEYQLIV.

It belongs to the SAICAR synthetase family.

The enzyme catalyses 5-amino-1-(5-phospho-D-ribosyl)imidazole-4-carboxylate + L-aspartate + ATP = (2S)-2-[5-amino-1-(5-phospho-beta-D-ribosyl)imidazole-4-carboxamido]succinate + ADP + phosphate + 2 H(+). The protein operates within purine metabolism; IMP biosynthesis via de novo pathway; 5-amino-1-(5-phospho-D-ribosyl)imidazole-4-carboxamide from 5-amino-1-(5-phospho-D-ribosyl)imidazole-4-carboxylate: step 1/2. In Shewanella pealeana (strain ATCC 700345 / ANG-SQ1), this protein is Phosphoribosylaminoimidazole-succinocarboxamide synthase.